We begin with the raw amino-acid sequence, 1647 residues long: MAP kinase-activating death domain protein (1647 aa).

The 255-residue stretch at 14–268 (YLVIVGARHP…VPVSGQKRVD (255 aa)) folds into the uDENN domain. Residues 108–122 (EKGEGGAGSRGKEGT) are compositionally biased toward basic and acidic residues. Positions 108–168 (EKGEGGAGSR…GKRRAKAGSR (61 aa)) are disordered. Low complexity predominate over residues 128–141 (SEEGGTESSESGSS). Positions 142 to 157 (LQPLSADSTPDVNQSP) are enriched in polar residues. S156 is subject to Phosphoserine. The span at 158–167 (RGKRRAKAGS) shows a compositional bias: basic residues. One can recognise a cDENN domain in the interval 289 to 429 (RFTLVDFPLH…ESLELKKHLK (141 aa)). In terms of domain architecture, dDENN spans 431–565 (ALASMSLNTQ…LNPTNYAFQR (135 aa)). Disordered stretches follow at residues 604–636 (ALSVPPERDSDSEPTDDSGSDSMDYDDSSSSYS) and 678–842 (NQKE…STEG). Acidic residues predominate over residues 615-630 (SEPTDDSGSDSMDYDD). S689 and S692 each carry phosphoserine. The segment covering 689–699 (SENSQENPPLR) has biased composition (polar residues). Low complexity predominate over residues 700–712 (SSSSTTASSSPST). Positions 750–768 (NVDRRQAEIGEGSVRRRIY) are enriched in basic and acidic residues. A compositionally biased stretch (polar residues) spans 790-804 (ESYTPRFSQHVSGNR). A phosphoserine mark is found at S813, S818, and S820. The segment covering 827–840 (RASSPNSTVSNTST) has biased composition (low complexity). Residues S858, S862, S916, S921, and S930 each carry the phosphoserine modification. 3 disordered regions span residues 913–941 (QKSSVIKHSPTVKREPPSPQGRSSNSSEN), 1051–1110 (KEPD…DTRS), and 1146–1243 (VFDL…DSEI). A compositionally biased stretch (polar residues) spans 932 to 941 (QGRSSNSSEN). S1059 is modified (phosphoserine). 2 positions are modified to phosphothreonine: T1061 and T1066. A Phosphoserine modification is found at S1110. Polar residues-rich tracts occupy residues 1158–1173 (QISADSGVSLTSSSQR), 1189–1207 (RSSSQDSEVSTVVSNSSGE), and 1234–1243 (SRGTLSDSEI). T1237 is modified (phosphothreonine). 2 positions are modified to phosphoserine: S1239 and S1270. The Death domain occupies 1340–1415 (GMDQGPQEMI…GLVYSQQINE (76 aa)).

It belongs to the MADD family. In terms of assembly, interacts (via death domain) with TNFRSF1A (via death domain). Interacts with PIDD1. Interacts with YWHAZ. Interacts (via death domain) with KIF1B; links the motor KIF1B to Rab3-carrying vesicles in anterograde synaptic vesicle transport. Interacts with KIF1A. Interacts (via uDENN domain) with RAB3A, RAB3B, RAB3C and RAB3D; the GTP-bound form of the Rab proteins is preferred for interaction. In terms of tissue distribution, expressed in testis, ovary, brain and heart. Expressed in spleen, thymus, prostate, testis, ovary, small instestine and colon. Expressed in liver. Not detected in the brain, breast, kidney, lung, ovary, pancreas, testis, uterus, stomach and thyroid. As to expression, expressed in the brain, breast, kidney, lung, ovary, pancreas, testis, uterus, stomach and thyroid.

The protein resides in the cell membrane. The protein localises to the cytoplasm. Its subcellular location is the cell projection. It is found in the axon. In terms of biological role, guanyl-nucleotide exchange factor that regulates small GTPases of the Rab family. Converts GDP-bound inactive form of RAB27A and RAB27B to the GTP-bound active forms. Converts GDP-bound inactive form of RAB3A, RAB3C and RAB3D to the GTP-bound active forms, GTPases involved in synaptic vesicle exocytosis and vesicle secretion. Plays a role in synaptic vesicle formation and in vesicle trafficking at the neuromuscular junction. Involved in up-regulating a post-docking step of synaptic exocytosis in central synapses. Probably by binding to the motor proteins KIF1B and KIF1A, mediates motor-dependent transport of GTP-RAB3A-positive vesicles to the presynaptic nerve terminals. Plays a role in TNFA-mediated activation of the MAPK pathway, including ERK1/2. May link TNFRSF1A with MAP kinase activation. May be involved in the regulation of TNFA-induced apoptosis. The chain is MAP kinase-activating death domain protein from Homo sapiens (Human).